Here is a 408-residue protein sequence, read N- to C-terminus: BRCA1-A complex subunit Abraxas 1 (408 aa).

Residues 7–155 (TAVISGFVFG…KSTHRLEYAL (149 aa)) enclose the MPN domain. Positions 210–272 (ALAEVNRISD…MEEKGNKVSE (63 aa)) form a coiled coil. The tract at residues 335–408 (HRRQAGKRKA…EVSRSKSPTF (74 aa)) is disordered. Residues 337–358 (RQAGKRKAHSKQLGKTSTKKSR) show a composition bias toward basic residues. The span at 394 to 408 (QSLNVEVSRSKSPTF) shows a compositional bias: polar residues. Residue S405 is modified to Phosphoserine. The pSXXF motif motif lies at 405–408 (SPTF).

This sequence belongs to the FAM175 family. Abraxas subfamily. As to quaternary structure, component of the BRCA1-A complex. Component of the BRISC complex. Homodimer. Interacts directly (when phosphorylated at Ser-405) with brca1. The phosphorylated homodimer can interact directly with two brca1 chains, giving rise to a heterotetramer. Phosphorylation of Ser-405 of the pSXXF motif by ATM or ATR constitutes a specific recognition motif for the BRCT domain of BRCA1.

It localises to the nucleus. Its function is as follows. Involved in DNA damage response and double-strand break (DSB) repair. Component of the BRCA1-A complex, acting as a central scaffold protein that assembles the various components of the complex and mediates the recruitment of brca1. The BRCA1-A complex specifically recognizes 'Lys-63'-linked ubiquitinated histones H2A and H2AX at DNA lesion sites, leading to target the brca1-bard1 heterodimer to sites of DNA damage at DSBs. This complex also possesses deubiquitinase activity that specifically removes 'Lys-63'-linked ubiquitin on histones H2A and H2AX. In Xenopus laevis (African clawed frog), this protein is BRCA1-A complex subunit Abraxas 1.